Reading from the N-terminus, the 321-residue chain is Biotin synthase (321 aa).

The region spanning 45–271 is the Radical SAM core domain; sequence FFGKKVKLNM…INPSKEIRIA (227 aa). Positions 63, 67, and 70 each coordinate [4Fe-4S] cluster. Cysteine 106, cysteine 139, cysteine 199, and arginine 269 together coordinate [2Fe-2S] cluster.

Belongs to the radical SAM superfamily. Biotin synthase family. Homodimer. [4Fe-4S] cluster is required as a cofactor. It depends on [2Fe-2S] cluster as a cofactor.

The catalysed reaction is (4R,5S)-dethiobiotin + (sulfur carrier)-SH + 2 reduced [2Fe-2S]-[ferredoxin] + 2 S-adenosyl-L-methionine = (sulfur carrier)-H + biotin + 2 5'-deoxyadenosine + 2 L-methionine + 2 oxidized [2Fe-2S]-[ferredoxin]. It functions in the pathway cofactor biosynthesis; biotin biosynthesis; biotin from 7,8-diaminononanoate: step 2/2. In terms of biological role, catalyzes the conversion of dethiobiotin (DTB) to biotin by the insertion of a sulfur atom into dethiobiotin via a radical-based mechanism. The protein is Biotin synthase of Staphylococcus haemolyticus (strain JCSC1435).